Reading from the N-terminus, the 154-residue chain is Probable deoxyuridine 5'-triphosphate nucleotidohydrolase (154 aa).

It belongs to the dCTP deaminase family. Archaeal dUTPase subfamily.

The catalysed reaction is dUTP + H2O = dUMP + diphosphate + H(+). It participates in pyrimidine metabolism; dUMP biosynthesis; dUMP from dCTP (dUTP route): step 2/2. This enzyme is involved in nucleotide metabolism: it produces dUMP, the immediate precursor of thymidine nucleotides and it decreases the intracellular concentration of dUTP so that uracil cannot be incorporated into DNA. The polypeptide is Probable deoxyuridine 5'-triphosphate nucleotidohydrolase (Methanopyrus kandleri (strain AV19 / DSM 6324 / JCM 9639 / NBRC 100938)).